Here is a 332-residue protein sequence, read N- to C-terminus: RING finger protein 225 (332 aa).

Residues methionine 1–leucine 55 are disordered. The span at serine 15–serine 27 shows a compositional bias: low complexity. The span at glutamate 36 to aspartate 46 shows a compositional bias: acidic residues. The segment at cysteine 63–arginine 111 adopts an RING-type zinc-finger fold. The segment at glycine 121–leucine 187 is disordered. A helical membrane pass occupies residues alanine 205–isoleucine 225. A disordered region spans residues threonine 259 to glutamine 332. 2 stretches are compositionally biased toward basic and acidic residues: residues alanine 280–valine 295 and alanine 323–glutamine 332.

The protein resides in the membrane. This Mus musculus (Mouse) protein is RING finger protein 225.